We begin with the raw amino-acid sequence, 295 residues long: Ribosomal RNA small subunit methyltransferase A (295 aa).

Residues Asn29, Leu31, Gly56, Glu77, Asp102, and Asn127 each contribute to the S-adenosyl-L-methionine site.

It belongs to the class I-like SAM-binding methyltransferase superfamily. rRNA adenine N(6)-methyltransferase family. RsmA subfamily.

The protein resides in the cytoplasm. It catalyses the reaction adenosine(1518)/adenosine(1519) in 16S rRNA + 4 S-adenosyl-L-methionine = N(6)-dimethyladenosine(1518)/N(6)-dimethyladenosine(1519) in 16S rRNA + 4 S-adenosyl-L-homocysteine + 4 H(+). Its function is as follows. Specifically dimethylates two adjacent adenosines (A1518 and A1519) in the loop of a conserved hairpin near the 3'-end of 16S rRNA in the 30S particle. May play a critical role in biogenesis of 30S subunits. This is Ribosomal RNA small subunit methyltransferase A from Anoxybacillus flavithermus (strain DSM 21510 / WK1).